Consider the following 105-residue polypeptide: Small ribosomal subunit protein uS10 (105 aa).

Belongs to the universal ribosomal protein uS10 family. In terms of assembly, part of the 30S ribosomal subunit.

In terms of biological role, involved in the binding of tRNA to the ribosomes. In Rickettsia rickettsii (strain Iowa), this protein is Small ribosomal subunit protein uS10.